A 57-amino-acid polypeptide reads, in one-letter code: Large ribosomal subunit protein bL32c (57 aa).

It belongs to the bacterial ribosomal protein bL32 family.

It localises to the plastid. It is found in the chloroplast. The sequence is that of Large ribosomal subunit protein bL32c from Liriodendron tulipifera (Tuliptree).